A 56-amino-acid polypeptide reads, in one-letter code: Large ribosomal subunit protein bL32 (56 aa).

The segment at 1–39 is disordered; the sequence is MAVQQNKKSRSKRGMRRSHDSLSTAQLSVDATSGELHRR. The span at 7 to 16 shows a compositional bias: basic residues; that stretch reads KKSRSKRGMR. Over residues 21–31 the composition is skewed to polar residues; sequence SLSTAQLSVDA.

The protein belongs to the bacterial ribosomal protein bL32 family.

The chain is Large ribosomal subunit protein bL32 from Shewanella piezotolerans (strain WP3 / JCM 13877).